The primary structure comprises 140 residues: Callisulfakinin (140 aa).

The N-terminal stretch at 1–30 is a signal peptide; it reads MYSQQRIFNSKYFIFFIAVLSIFWLPTMSA. The propeptide occupies 31–109; that stretch reads RNLENSKNEN…LEYEDEDRSK (79 aa). A Sulfotyrosine modification is found at Tyr-114. Residue Phe-119 is modified to Phenylalanine amide. Sulfotyrosine is present on Tyr-131. Phe-136 bears the Phenylalanine amide mark. Residues 139 to 140 constitute a propeptide that is removed on maturation; sequence SI.

This sequence belongs to the gastrin/cholecystokinin family. In terms of tissue distribution, in brain, it is specifically expressed in four pairs of neurons. Not expressed in other cells of the brain and in the thoracico-abdominal ganglion.

The protein localises to the secreted. Functionally, callisulfakinin I is a neuropeptide. The existence of Callisulfakinin II is uncertain. This is Callisulfakinin from Calliphora vomitoria (Blue bottle fly).